The primary structure comprises 152 residues: Superoxide dismutase [Cu-Zn] (152 aa).

3 residues coordinate Cu cation: His45, His47, and His62. A disulfide bridge links Cys56 with Cys145. 4 residues coordinate Zn(2+): His62, His70, His79, and Asp82. Residue His119 coordinates Cu cation.

This sequence belongs to the Cu-Zn superoxide dismutase family. As to quaternary structure, homodimer. It depends on Cu cation as a cofactor. Requires Zn(2+) as cofactor.

The protein resides in the cytoplasm. It catalyses the reaction 2 superoxide + 2 H(+) = H2O2 + O2. Its function is as follows. Destroys radicals which are normally produced within the cells and which are toxic to biological systems. The sequence is that of Superoxide dismutase [Cu-Zn] (SODCC) from Pisum sativum (Garden pea).